The chain runs to 734 residues: Photosystem I P700 chlorophyll a apoprotein A2 (734 aa).

Transmembrane regions (helical) follow at residues 46–69 (IFAS…FHVA), 135–158 (LYTG…LHLQ), 175–199 (LNHH…HVAI), 273–291 (MAHH…GHMY), 330–353 (IHFQ…QHMY), 369–395 (AALY…IFFI), 417–439 (AIIS…LYVH), and 517–535 (FLVH…LILV). Positions 559 and 568 each coordinate [4Fe-4S] cluster. A run of 2 helical transmembrane segments spans residues 575 to 596 (AFYL…YWHW) and 643 to 665 (LSVW…MFLI). The chlorophyll a site is built by histidine 654, methionine 662, and tyrosine 670. Tryptophan 671 provides a ligand contact to phylloquinone. The chain crosses the membrane as a helical span at residues 707–727 (LVGLAHFSVGYIFTYAAFLIA).

Belongs to the PsaA/PsaB family. The PsaA/B heterodimer binds the P700 chlorophyll special pair and subsequent electron acceptors. PSI consists of a core antenna complex that captures photons, and an electron transfer chain that converts photonic excitation into a charge separation. The eukaryotic PSI reaction center is composed of at least 11 subunits. The cofactor is P700 is a chlorophyll a/chlorophyll a' dimer, A0 is one or more chlorophyll a, A1 is one or both phylloquinones and FX is a shared 4Fe-4S iron-sulfur center..

The protein resides in the plastid. It localises to the chloroplast thylakoid membrane. The enzyme catalyses reduced [plastocyanin] + hnu + oxidized [2Fe-2S]-[ferredoxin] = oxidized [plastocyanin] + reduced [2Fe-2S]-[ferredoxin]. In terms of biological role, psaA and PsaB bind P700, the primary electron donor of photosystem I (PSI), as well as the electron acceptors A0, A1 and FX. PSI is a plastocyanin-ferredoxin oxidoreductase, converting photonic excitation into a charge separation, which transfers an electron from the donor P700 chlorophyll pair to the spectroscopically characterized acceptors A0, A1, FX, FA and FB in turn. Oxidized P700 is reduced on the lumenal side of the thylakoid membrane by plastocyanin. The protein is Photosystem I P700 chlorophyll a apoprotein A2 of Crucihimalaya wallichii (Rock-cress).